We begin with the raw amino-acid sequence, 182 residues long: MLNKSVARRYAEAFFSIARETGKVDELQQELEKLVSIIETTENLPEYFAHLLIPAKAKKEVANKLFGGQVSQLTLNFLNMIIDKRRETYIGLISEEYRDMADELRNITKAELTAAAPVSEADMKNLEQNLSAKTGKTVQLSLKVDPGLIGGLKIRIGDQIVDATVAKKLEMLKEQLKQAKIS.

The protein belongs to the ATPase delta chain family. In terms of assembly, F-type ATPases have 2 components, F(1) - the catalytic core - and F(0) - the membrane proton channel. F(1) has five subunits: alpha(3), beta(3), gamma(1), delta(1), epsilon(1). F(0) has three main subunits: a(1), b(2) and c(10-14). The alpha and beta chains form an alternating ring which encloses part of the gamma chain. F(1) is attached to F(0) by a central stalk formed by the gamma and epsilon chains, while a peripheral stalk is formed by the delta and b chains.

The protein localises to the cell membrane. In terms of biological role, f(1)F(0) ATP synthase produces ATP from ADP in the presence of a proton or sodium gradient. F-type ATPases consist of two structural domains, F(1) containing the extramembraneous catalytic core and F(0) containing the membrane proton channel, linked together by a central stalk and a peripheral stalk. During catalysis, ATP synthesis in the catalytic domain of F(1) is coupled via a rotary mechanism of the central stalk subunits to proton translocation. This protein is part of the stalk that links CF(0) to CF(1). It either transmits conformational changes from CF(0) to CF(1) or is implicated in proton conduction. The sequence is that of ATP synthase subunit delta from Syntrophomonas wolfei subsp. wolfei (strain DSM 2245B / Goettingen).